The sequence spans 517 residues: Protein translocase subunit SecD (517 aa).

The next 6 helical transmembrane spans lie at 5–25 (LRWI…FPLD), 357–377 (IWAG…YYKF), 380–400 (FIAS…MGMF), 407–427 (PGIA…VLIF), 455–475 (IIDS…FGTG), and 479–499 (GFAV…VTLS).

This sequence belongs to the SecD/SecF family. SecD subfamily. In terms of assembly, forms a complex with SecF. Part of the essential Sec protein translocation apparatus which comprises SecA, SecYEG and auxiliary proteins SecDF. Other proteins may also be involved.

It localises to the cell inner membrane. In terms of biological role, part of the Sec protein translocase complex. Interacts with the SecYEG preprotein conducting channel. SecDF uses the proton motive force (PMF) to complete protein translocation after the ATP-dependent function of SecA. This is Protein translocase subunit SecD from Calditerrivibrio nitroreducens (strain DSM 19672 / NBRC 101217 / Yu37-1).